The following is a 187-amino-acid chain: MYAGGRVVRSAFARGKVCYLIGSVLWGSVSCTQPRVQKWVQNDGKVNVHSPQERAGVVATFGTVRITRSDYERTKAELQDVVAHLNRITAERDYHKWLVYLSDAYRRAYSMPDILQQSSDALPKKGVRLRHLRDYFIHVFVPSRQNVRVDSIVFESPTRVDVIMNHGGKALLVYKIEKIHSAWKLLP.

An N-terminal signal peptide occupies residues 1 to 17; sequence MYAGGRVVRSAFARGKV. A lipid anchor (N-palmitoyl cysteine) is attached at C18. C18 is lipidated: S-diacylglycerol cysteine.

The protein resides in the cell membrane. This is an uncharacterized protein from Treponema pallidum (strain Nichols).